We begin with the raw amino-acid sequence, 489 residues long: MNYFNSLNFRQKLINLRKCKLVEKNFFSKKCDILKRKNIVIVGCGSQGLNQGLNMRDSGLHVSYALRGSSILNKNKSWENATKNNFFVDTYENIIPTADLVINLTPDKQRKEVVTLLQKFMKENSVLGFSHGFHIVEIGQKIRNDITVIMVAPKCPGTEVREEYKKGFGVPSLIAVHMENDPKKIGFEIAKAWAYSLGSHRAGVLHSSFIAEVKSDLMGEQTILCGMLQTSSLVCYDQLVSQGKDPNYAGKLIQLGWESITESVKHGGITLMLNRLSNTAKIRAYILSKKLKVMFSSLFRKHMDDIISGEFSKNMIDDWNSDDKKLKEWRTQIKKTDFEKCKICHKEISEQEYFDQGLLMVAILKAGIELSFEIMVETGIKEESAYYESLHELPLIANTIARKRLYEMNLVISDTAEYGSYLFSQSAIPLLKEFMNELCPGDLGEKISDLQFDNVTLNKINHDIENHPVEIIGKKLRKYMVDMKPIKLS.

One can recognise a KARI N-terminal Rossmann domain in the interval 16-207 (LRKCKLVEKN…GSHRAGVLHS (192 aa)). NADP(+) is bound by residues 44–47 (CGSQ), R67, S77, and 107–109 (DKQ). The active site involves H131. G157 is a binding site for NADP(+). KARI C-terminal knotted domains follow at residues 208–343 (SFIA…KCKI) and 344–483 (CHKE…MVDM). The Mg(2+) site is built by D216, E220, E388, and E392. S413 contributes to the substrate binding site.

It belongs to the ketol-acid reductoisomerase family. Mg(2+) is required as a cofactor.

The catalysed reaction is (2R)-2,3-dihydroxy-3-methylbutanoate + NADP(+) = (2S)-2-acetolactate + NADPH + H(+). The enzyme catalyses (2R,3R)-2,3-dihydroxy-3-methylpentanoate + NADP(+) = (S)-2-ethyl-2-hydroxy-3-oxobutanoate + NADPH + H(+). It functions in the pathway amino-acid biosynthesis; L-isoleucine biosynthesis; L-isoleucine from 2-oxobutanoate: step 2/4. It participates in amino-acid biosynthesis; L-valine biosynthesis; L-valine from pyruvate: step 2/4. In terms of biological role, involved in the biosynthesis of branched-chain amino acids (BCAA). Catalyzes an alkyl-migration followed by a ketol-acid reduction of (S)-2-acetolactate (S2AL) to yield (R)-2,3-dihydroxy-isovalerate. In the isomerase reaction, S2AL is rearranged via a Mg-dependent methyl migration to produce 3-hydroxy-3-methyl-2-ketobutyrate (HMKB). In the reductase reaction, this 2-ketoacid undergoes a metal-dependent reduction by NADPH to yield (R)-2,3-dihydroxy-isovalerate. The sequence is that of Ketol-acid reductoisomerase (NADP(+)) from Buchnera aphidicola subsp. Schlechtendalia chinensis.